The sequence spans 261 residues: Probable pectin methylesterase CGR2 (261 aa).

The Cytoplasmic portion of the chain corresponds to 1–35 (MARRQVGSTRRVGDGGSFPFAGALHSKSRSSPLLS). Residues 36 to 56 (ICLVLVGACLLIGYAYSGPGI) form a helical membrane-spanning segment. At 57–261 (FKSIKEVSKV…CQVFHLKPLH (205 aa)) the chain is on the lumenal side. The N-linked (GlcNAc...) asparagine glycan is linked to Asn174.

The protein belongs to the class I-like SAM-binding methyltransferase superfamily.

It is found in the golgi apparatus membrane. Together with CGR3, required for homogalacturonan pectins (HG) methylesterification in the Golgi apparatus prior to integration into cell walls, essential for general growth and development. Promotes rosette growth. Impacts carbon (C) partitioning, photosynthesis and respiration efficiency by influencing leaf mesophyll cell walls morphology and physiology; pectin methylesterification modulates both expansion and positioning of cells in leaves, probably by changing cell walls plasticity. This is Probable pectin methylesterase CGR2 from Arabidopsis thaliana (Mouse-ear cress).